The chain runs to 1888 residues: E3 ubiquitin-protein ligase UPL3 (1888 aa).

Positions 1–10 are enriched in basic and acidic residues; that stretch reads METRSRKRAE. Residues 1-157 form a disordered region; that stretch reads METRSRKRAE…NGGFMHPNMS (157 aa). The span at 41 to 81 shows a compositional bias: low complexity; that stretch reads LSSSSSSSLAPTPPSSSTTTRSRSSRSAAAAAPMDTSTDSS. Residues 97 to 124 are compositionally biased toward basic and acidic residues; it reads NSDKGKEKEHDVRIRERERERDRAREQL. The segment covering 137–146 has biased composition (acidic residues); the sequence is DEDDDNDSED. 4 ARM repeats span residues 227-267, 270-310, 312-349, and 351-390; these read EDSL…HLCD, PSSC…KISQ, HPTACLRAGALMAVLSYLDFFSTGVQRVALSTAANMCK, and LPSDASDYVMEAVPLLTNLLQYHDSKVLEYASICLTRIAE. 4 disordered regions span residues 660-711, 970-1119, 1134-1157, and 1280-1307; these read KPSH…IGAN, ALKP…LPMC, DDDGLATSGRQMNPASGGTSGAAA, and RLSVGGASSTTPSKSTKSATTNSSVESQ. A compositionally biased stretch (low complexity) spans 986-1002; the sequence is PSGAGVSSPSSSTPAST. Positions 1019–1029 are enriched in basic and acidic residues; sequence TSKKDPVHEKG. Over residues 1076–1113 the composition is skewed to acidic residues; sequence SSEDEELEISPVDIDDALVIEEDDISDDEDDDNEDVLD. 2 stretches are compositionally biased toward low complexity: residues 1148–1157 and 1286–1303; these read ASGGTSGAAA and ASSTTPSKSTKSATTNSS. Residues 1377–1451 form a K-box region; that stretch reads AKVPLDEFVN…ALNRLQQQQG (75 aa). One can recognise an HECT domain in the interval 1490-1888; it reads MYSSQKAVLE…NEGQGSFDLS (399 aa). The Glycyl thioester intermediate role is filled by Cys1855.

The protein belongs to the UPL family. K-HECT subfamily. In terms of tissue distribution, widely expressed.

The enzyme catalyses S-ubiquitinyl-[E2 ubiquitin-conjugating enzyme]-L-cysteine + [acceptor protein]-L-lysine = [E2 ubiquitin-conjugating enzyme]-L-cysteine + N(6)-ubiquitinyl-[acceptor protein]-L-lysine.. Its pathway is protein modification; protein ubiquitination. Functionally, probable E3 ubiquitin-protein ligase which mediates ubiquitination and subsequent proteasomal degradation of target proteins. Involved in the repression of endoreduplication process and the cell morphogenesis in the trichomes. This is E3 ubiquitin-protein ligase UPL3 (UPL3) from Arabidopsis thaliana (Mouse-ear cress).